Consider the following 938-residue polypeptide: Isoleucine--tRNA ligase (938 aa).

A 'HIGH' region motif is present at residues 58–68 (PYANGNIHMGH). E566 provides a ligand contact to L-isoleucyl-5'-AMP. The 'KMSKS' region motif lies at 607–611 (KMSKS). K610 contacts ATP. 4 residues coordinate Zn(2+): C906, C909, C926, and C929.

Belongs to the class-I aminoacyl-tRNA synthetase family. IleS type 1 subfamily. In terms of assembly, monomer. Zn(2+) is required as a cofactor.

The protein localises to the cytoplasm. It carries out the reaction tRNA(Ile) + L-isoleucine + ATP = L-isoleucyl-tRNA(Ile) + AMP + diphosphate. Functionally, catalyzes the attachment of isoleucine to tRNA(Ile). As IleRS can inadvertently accommodate and process structurally similar amino acids such as valine, to avoid such errors it has two additional distinct tRNA(Ile)-dependent editing activities. One activity is designated as 'pretransfer' editing and involves the hydrolysis of activated Val-AMP. The other activity is designated 'posttransfer' editing and involves deacylation of mischarged Val-tRNA(Ile). In Nitratidesulfovibrio vulgaris (strain DP4) (Desulfovibrio vulgaris), this protein is Isoleucine--tRNA ligase.